The following is a 574-amino-acid chain: Septation ring formation regulator EzrA (574 aa).

At 1 to 7 the chain is on the extracellular side; the sequence is MSSGIIL. Residues 8-26 form a helical membrane-spanning segment; sequence LIVAIVLLVIIAYLVGVII. At 27–574 the chain is on the cytoplasmic side; it reads RKRNDTLITS…YEKTRERIRF (548 aa). Coiled coils occupy residues 102–131, 161–190, 276–379, and 459–493; these read NFIRAKHEINSVESQLNLVEEDITAIREAL, ENEDNFGSTMAEIEKQMKNIEAEFSQFVAL, VTLD…QQEK, and QLEALMDELSRGRINIEAVSRLSEVATAAIANLEE.

The protein belongs to the EzrA family.

It is found in the cell membrane. Its function is as follows. Negative regulator of FtsZ ring formation; modulates the frequency and position of FtsZ ring formation. Inhibits FtsZ ring formation at polar sites. Interacts either with FtsZ or with one of its binding partners to promote depolymerization. The protein is Septation ring formation regulator EzrA of Streptococcus equi subsp. zooepidemicus (strain H70).